We begin with the raw amino-acid sequence, 265 residues long: Indole-3-glycerol phosphate synthase (265 aa).

This sequence belongs to the TrpC family.

The catalysed reaction is 1-(2-carboxyphenylamino)-1-deoxy-D-ribulose 5-phosphate + H(+) = (1S,2R)-1-C-(indol-3-yl)glycerol 3-phosphate + CO2 + H2O. It functions in the pathway amino-acid biosynthesis; L-tryptophan biosynthesis; L-tryptophan from chorismate: step 4/5. The sequence is that of Indole-3-glycerol phosphate synthase from Xanthomonas oryzae pv. oryzae (strain PXO99A).